We begin with the raw amino-acid sequence, 688 residues long: Elongation factor G (688 aa).

The 275-residue stretch at 8-282 (DKFRNFGIMA…GVVDYLPSPL (275 aa)) folds into the tr-type G domain. GTP contacts are provided by residues 17–24 (AHIDAGKT), 81–85 (DTPGH), and 135–138 (NKMD).

The protein belongs to the TRAFAC class translation factor GTPase superfamily. Classic translation factor GTPase family. EF-G/EF-2 subfamily.

Its subcellular location is the cytoplasm. Its function is as follows. Catalyzes the GTP-dependent ribosomal translocation step during translation elongation. During this step, the ribosome changes from the pre-translocational (PRE) to the post-translocational (POST) state as the newly formed A-site-bound peptidyl-tRNA and P-site-bound deacylated tRNA move to the P and E sites, respectively. Catalyzes the coordinated movement of the two tRNA molecules, the mRNA and conformational changes in the ribosome. The chain is Elongation factor G from Clostridium beijerinckii (strain ATCC 51743 / NCIMB 8052) (Clostridium acetobutylicum).